A 428-amino-acid polypeptide reads, in one-letter code: Enolase (428 aa).

A (2R)-2-phosphoglycerate-binding site is contributed by glutamine 163. The active-site Proton donor is glutamate 205. Positions 242, 285, and 311 each coordinate Mg(2+). Residues lysine 336, arginine 365, serine 366, and lysine 387 each contribute to the (2R)-2-phosphoglycerate site. The active-site Proton acceptor is lysine 336.

Belongs to the enolase family. The cofactor is Mg(2+).

It localises to the cytoplasm. The protein resides in the secreted. Its subcellular location is the cell surface. It carries out the reaction (2R)-2-phosphoglycerate = phosphoenolpyruvate + H2O. It functions in the pathway carbohydrate degradation; glycolysis; pyruvate from D-glyceraldehyde 3-phosphate: step 4/5. In terms of biological role, catalyzes the reversible conversion of 2-phosphoglycerate (2-PG) into phosphoenolpyruvate (PEP). It is essential for the degradation of carbohydrates via glycolysis. This is Enolase from Desulfatibacillum aliphaticivorans.